Reading from the N-terminus, the 108-residue chain is MLKGNLAGLMKQAQQMQENMRKMQEQLAQIEVEGQSGAGLVKVTMTCRNEVRRVSIDPSLLADDKDMLEDLVAAAFNDAVRKAEATSQEKMSGMTSGLPLPPGFKLPF.

The disordered stretch occupies residues 84–108 (EATSQEKMSGMTSGLPLPPGFKLPF). The span at 85 to 95 (ATSQEKMSGMT) shows a compositional bias: polar residues. Residues 99–108 (PLPPGFKLPF) show a composition bias toward pro residues.

It belongs to the YbaB/EbfC family. As to quaternary structure, homodimer.

It is found in the cytoplasm. Its subcellular location is the nucleoid. Functionally, binds to DNA and alters its conformation. May be involved in regulation of gene expression, nucleoid organization and DNA protection. This chain is Nucleoid-associated protein Bmul_1447/BMULJ_01796, found in Burkholderia multivorans (strain ATCC 17616 / 249).